We begin with the raw amino-acid sequence, 558 residues long: Potassium-transporting ATPase potassium-binding subunit (558 aa).

12 helical membrane-spanning segments follow: residues 1–21, 66–86, 127–147, 166–186, 245–265, 281–301, 327–347, 354–374, 377–397, 416–436, 482–502, and 531–551; these read MEIILFLTMMVMITYVFSGYL, FNGFMGFITFVLLIVQQWLFL, MIVMTYLMFTSSASGYAVCIA, IVRFIVRVLLPLSCLISILLM, IWSNFIEMGSMMLLPMSMLFL, ALILFVAMFFIFIAILTLTMW, FGAGLSALFTVITTAFTTGSV, LTPLGGLGPMVLMMLNVVFGG, VGLMNLLIYVLLTVFICSLMV, IVLVFLIHPILILVFSALAFM, ISTGIIMLLSRYIPIILQLMI, and IVFIVLLSGLTFIPVLLLGPI.

It belongs to the KdpA family. As to quaternary structure, the system is composed of three essential subunits: KdpA, KdpB and KdpC.

The protein localises to the cell membrane. Part of the high-affinity ATP-driven potassium transport (or Kdp) system, which catalyzes the hydrolysis of ATP coupled with the electrogenic transport of potassium into the cytoplasm. This subunit binds the extracellular potassium ions and delivers the ions to the membrane domain of KdpB through an intramembrane tunnel. The protein is Potassium-transporting ATPase potassium-binding subunit of Staphylococcus aureus (strain MSSA476).